The chain runs to 293 residues: Probable metal transport system membrane protein TC_0698 (293 aa).

7 helical membrane passes run 18–38 (SLLA…YIVV), 41–61 (IVSI…IALW), 68–88 (LPIS…ICIG), 101–121 (IISM…SKLP), 142–162 (DLYF…ICHT), 186–206 (FLLL…MGVI), and 242–262 (FLGI…IAIL).

The protein belongs to the ABC-3 integral membrane protein family.

The protein localises to the cell inner membrane. In terms of biological role, part of an ATP-driven transport system TC_0696/TC_0697/TC_0698 for a metal. This Chlamydia muridarum (strain MoPn / Nigg) protein is Probable metal transport system membrane protein TC_0698.